The following is a 414-amino-acid chain: Histidine--tRNA ligase (414 aa).

Belongs to the class-II aminoacyl-tRNA synthetase family. Homodimer.

The protein resides in the cytoplasm. The catalysed reaction is tRNA(His) + L-histidine + ATP = L-histidyl-tRNA(His) + AMP + diphosphate + H(+). The chain is Histidine--tRNA ligase from Synechococcus sp. (strain RCC307).